A 371-amino-acid chain; its full sequence is F-box protein At2g26850 (371 aa).

The F-box domain occupies 59 to 105; that stretch reads KMSILDLPDLPLDCILELLPPSELCTMARVCSSLRERCVSDHLWEKH.

In Arabidopsis thaliana (Mouse-ear cress), this protein is F-box protein At2g26850.